A 430-amino-acid polypeptide reads, in one-letter code: Potassium channel subfamily K member 12 (430 aa).

The Cytoplasmic portion of the chain corresponds to 1-38 (MSSRSPRPPPRRSRRRLPRPSCCCCCCRRSHLNEDTGR). The interval 11 to 16 (RRSRRR) is ER retention/retrieval signal. The chain crosses the membrane as a helical span at residues 39 to 59 (FVLLAALIGLYLVAGATVFSA). N78 carries an N-linked (GlcNAc...) asparagine glycan. Positions 114-134 (WDFPGAFYFVGTVVSTIGFGM) form an intramembrane region, pore-forming. Residues T129, I130, and G131 each coordinate K(+). The interval 129 to 134 (TIGFGM) is selectivity filter 1. Residues 145-165 (FLIAYGLFGCAGTILFFNLFL) form a helical membrane-spanning segment. The Cytoplasmic segment spans residues 166–212 (ERIISLLAFIMRACRERQLRRSGLLPATFRRGSALSEADSLAGWKPS). A helical transmembrane segment spans residues 213 to 233 (VYHVLLILGLFAVLLSCCASA). The pore-forming intramembrane region spans 243 to 263 (YVDSLYFCFVTFSTIGFGDLV). Residues T256, I257, G258, and F259 each contribute to the K(+) site. The selectivity filter 2 stretch occupies residues 256–261 (TIGFGD). A helical transmembrane segment spans residues 282–302 (LFILLGVCCIYSLFNVISILI). Residues 303 to 430 (KQVLNWMLRK…NRLAETSASR (128 aa)) are Cytoplasmic-facing.

This sequence belongs to the two pore domain potassium channel (TC 1.A.1.8) family. Homodimer. Heterodimer with KCNK13.

Its subcellular location is the cell membrane. It is found in the endoplasmic reticulum membrane. The catalysed reaction is K(+)(in) = K(+)(out). In terms of biological role, k(+) channel subunit that may homo- and heterodimerize to form functional channels with distinct regulatory and gating properties. Can heterodimerize with KCNK13 subunit to conduct K(+) outward rectifying currents at the plasma membrane. The homodimers are mainly retained in the endoplasmic reticulum compartment and may be targeted to the cell surface upon phosphorylation or other activation signals yet to be elucidated. The polypeptide is Potassium channel subfamily K member 12 (Homo sapiens (Human)).